The chain runs to 299 residues: MKPDAQRVKQFLLSLQDDICQQLAAVDGADFVEDSWQRDAGGGGRSRVLRNGGVFEQAGVNFSHVHGDAMPASATAHRPELAGRSFEAMGVSLVVHPLNPYIPTSHANVRFFIAEKPGAEPVWWFGGGFDLTPYYAFEEDAIHWHRTARDLCQPYGEDVYPRYKKWCDDYFFLKHRDEQRGIGGLFFDDLNTPDFDSCFRFMQAVGKGYTDAFLPIVERRKAMVWGERERHFQLYRRGRYVEFNLVWDRGTLFGLQTGGRTESILMSMPPLVRWEYDWQPEEGSPEAALSEFIKVRDWV.

Substrate is bound at residue Ser-92. A divalent metal cation-binding residues include His-96 and His-106. His-106 acts as the Proton donor in catalysis. Residue 108-110 (NVR) participates in substrate binding. Residues His-145 and His-175 each coordinate a divalent metal cation. The tract at residues 240 to 275 (YVEFNLVWDRGTLFGLQTGGRTESILMSMPPLVRWE) is important for dimerization. Residue 258–260 (GGR) coordinates substrate.

It belongs to the aerobic coproporphyrinogen-III oxidase family. In terms of assembly, homodimer. The cofactor is a divalent metal cation.

Its subcellular location is the cytoplasm. The enzyme catalyses coproporphyrinogen III + O2 + 2 H(+) = protoporphyrinogen IX + 2 CO2 + 2 H2O. It functions in the pathway porphyrin-containing compound metabolism; protoporphyrin-IX biosynthesis; protoporphyrinogen-IX from coproporphyrinogen-III (O2 route): step 1/1. Functionally, involved in the heme biosynthesis. Catalyzes the aerobic oxidative decarboxylation of propionate groups of rings A and B of coproporphyrinogen-III to yield the vinyl groups in protoporphyrinogen-IX. The chain is Oxygen-dependent coproporphyrinogen-III oxidase from Citrobacter koseri (strain ATCC BAA-895 / CDC 4225-83 / SGSC4696).